The primary structure comprises 332 residues: Cysteine and histidine-rich domain-containing protein 1 (332 aa).

A2 carries the post-translational modification N-acetylalanine. An interaction with PPP5C region spans residues 2-77 (ALLCYNRACG…KPPEPVKPEV (76 aa)). Positions 5, 10, 24, 27, 42, and 43 each coordinate Zn(2+). CHORD domains are found at residues 5-64 (CYNR…KGRH) and 157-216 (CKNG…KGRH). T47 carries the phosphothreonine modification. S51 is subject to Phosphoserine. Residues C59, H64, C157, C162, C176, H179, C194, C195, C211, and H216 each coordinate Zn(2+). Positions 62 to 82 (GRHNSEKPPEPVKPEVKTTEK) are disordered. The span at 64–82 (HNSEKPPEPVKPEVKTTEK) shows a compositional bias: basic and acidic residues. The interaction with HSP90AA1 and HSP90AB1 stretch occupies residues 65 to 316 (NSEKPPEPVK…AEPMQWASLE (252 aa)). In terms of domain architecture, CS spans 227–316 (VVPCRHDWHQ…AEPMQWASLE (90 aa)).

As to quaternary structure, interacts with HSP90AA1, HSP90AB1, PPP5C, ROCK1 and ROCK2.

Its function is as follows. Regulates centrosome duplication, probably by inhibiting the kinase activity of ROCK2. Proposed to act as co-chaperone for HSP90. May play a role in the regulation of NOD1 via a HSP90 chaperone complex. In vitro, has intrinsic chaperone activity. This function may be achieved by inhibiting association of ROCK2 with NPM1. Plays a role in ensuring the localization of the tyrosine kinase receptor EGFR to the plasma membrane, and thus ensures the subsequent regulation of EGFR activity and EGF-induced actin cytoskeleton remodeling. Involved in stress response. Prevents tumorigenesis. The polypeptide is Cysteine and histidine-rich domain-containing protein 1 (CHORDC1) (Macaca fascicularis (Crab-eating macaque)).